The sequence spans 513 residues: Na(+)/H(+) antiporter NhaB (513 aa).

A run of 12 helical transmembrane segments spans residues 23–43 (LALIIFLIVNPLIFLISPFVA), 52–72 (IFTLAMALKCYPLLPGGLLAI), 97–117 (LLLMFMVAGIYFMKQLLLFIF), 120–140 (LLLSIRSKMLLSLSFCVAAAF), 144–164 (FLDALTVVAVVISVAVGFYGI), 202–222 (LMMHAGVGTALGGVMTMVGEP), 238–258 (FFLRMSPVTVPVLICGLLTCL), 303–323 (AIIGVWLVTALALHLAEVGLI), 348–368 (TESLPFTALLTVFFSVVAVII), 391–411 (LFYIFNGLLSSISDNVFVGTI), 447–467 (ATPNGQAAFLFLLTSALAPLI), and 475–495 (VWMALPYTLVLTVAGLLCVEF).

Belongs to the NhaB Na(+)/H(+) (TC 2.A.34) antiporter family.

The protein localises to the cell inner membrane. It catalyses the reaction 2 Na(+)(in) + 3 H(+)(out) = 2 Na(+)(out) + 3 H(+)(in). Na(+)/H(+) antiporter that extrudes sodium in exchange for external protons. This is Na(+)/H(+) antiporter NhaB from Escherichia coli O127:H6 (strain E2348/69 / EPEC).